The following is a 462-amino-acid chain: NAD-capped RNA hydrolase NUDT12 (462 aa).

ANK repeat units follow at residues 11 to 40 (EIVT…SLLN), 45 to 74 (NGWT…DRSI), and 78 to 98 (SRQT…ANLL). Lysine 185 carries the N6-succinyllysine modification. Zn(2+)-binding residues include cysteine 284 and cysteine 287. Lysine 292 is modified (N6-succinyllysine). Residues cysteine 302 and cysteine 307 each coordinate Zn(2+). Substrate-binding positions include tyrosine 318, 354–356 (AGF), glutamate 370, glutamate 374, and glutamate 415. The region spanning 319–453 (PRVDPVVIMQ…SRAIAHQLIK (135 aa)) is the Nudix hydrolase domain. Positions 354, 370, 374, and 415 each coordinate Mg(2+). A Nudix box motif is present at residues 355-376 (GFIEPGETIEDAVRREVEEESG). The Microbody targeting signal motif lies at 460 to 462 (PNL).

This sequence belongs to the Nudix hydrolase family. NudC subfamily. As to quaternary structure, homodimer. Homodimerization is essential for its catalytic activity and protein stability. Interacts (via ANK repeats) with BLMH. Mg(2+) serves as cofactor. Zn(2+) is required as a cofactor.

The protein localises to the cytoplasm. It localises to the peroxisome. The protein resides in the cytoplasmic granule. The enzyme catalyses a 5'-end NAD(+)-phospho-ribonucleoside in mRNA + H2O = a 5'-end phospho-adenosine-phospho-ribonucleoside in mRNA + beta-nicotinamide D-ribonucleotide + 2 H(+). The catalysed reaction is NAD(+) + H2O = beta-nicotinamide D-ribonucleotide + AMP + 2 H(+). It carries out the reaction NADH + H2O = reduced beta-nicotinamide D-ribonucleotide + AMP + 2 H(+). It catalyses the reaction NADPH + H2O = reduced beta-nicotinamide D-ribonucleotide + adenosine 2',5'-bisphosphate + 2 H(+). MRNA decapping enzyme that specifically removes the nicotinamide adenine dinucleotide (NAD) cap from a subset of mRNAs by hydrolyzing the diphosphate linkage to produce nicotinamide mononucleotide (NMN) and 5' monophosphate mRNA. The NAD-cap is present at the 5'-end of some RNAs; in contrast to the canonical N7 methylguanosine (m7G) cap, the NAD cap promotes mRNA decay. Preferentially acts on NAD-capped transcripts in response to nutrient stress. Also acts on free nicotinamide adenine dinucleotide molecules: hydrolyzes NAD(H) into NMN(H) and AMP, and NADPH into NMNH and 2',5'-ADP. May act to regulate the concentration of peroxisomal nicotinamide nucleotide cofactors required for oxidative metabolism in this organelle. Regulates the levels of circadian clock components PER1, PER2, PER3 and CRY2 in the liver. The sequence is that of NAD-capped RNA hydrolase NUDT12 from Pongo abelii (Sumatran orangutan).